Here is a 60-residue protein sequence, read N- to C-terminus: Large ribosomal subunit protein uL30 (60 aa).

The protein belongs to the universal ribosomal protein uL30 family. Part of the 50S ribosomal subunit.

This chain is Large ribosomal subunit protein uL30, found in Sphingopyxis alaskensis (strain DSM 13593 / LMG 18877 / RB2256) (Sphingomonas alaskensis).